The primary structure comprises 500 residues: L-arabinose isomerase (500 aa).

The Mn(2+) site is built by Glu-306, Glu-333, His-350, and His-450.

The protein belongs to the arabinose isomerase family. Homohexamer. Mn(2+) is required as a cofactor.

The enzyme catalyses beta-L-arabinopyranose = L-ribulose. The protein operates within carbohydrate degradation; L-arabinose degradation via L-ribulose; D-xylulose 5-phosphate from L-arabinose (bacterial route): step 1/3. Its function is as follows. Catalyzes the conversion of L-arabinose to L-ribulose. The sequence is that of L-arabinose isomerase from Shigella dysenteriae serotype 1 (strain Sd197).